Here is a 437-residue protein sequence, read N- to C-terminus: Phosphatidylserine decarboxylase proenzyme 1, mitochondrial (437 aa).

The transit peptide at 1-18 (MLKFHRNVKPQFGAFARY) directs the protein to the mitochondrion. Over 19–38 (SSLGKHNSRKRVGIIRLAYG) the chain is Mitochondrial matrix. Residues 39–57 (LTGIGLVGLAGFAWAQDRH) form a helical membrane-spanning segment. The Mitochondrial intermembrane portion of the chain corresponds to 58–437 (EKTYQKKGVQ…PLGRVVPSSH (380 aa)). Residues Asp-157, His-287, and Ser-401 each act as charge relay system; for autoendoproteolytic cleavage activity in the active site. Ser-401 serves as the catalytic Schiff-base intermediate with substrate; via pyruvic acid; for decarboxylase activity. Ser-401 carries the post-translational modification Pyruvic acid (Ser); by autocatalysis.

This sequence belongs to the phosphatidylserine decarboxylase family. PSD-B subfamily. Eukaryotic type I sub-subfamily. Heterodimer of a large membrane-associated beta subunit and a small pyruvoyl-containing alpha subunit. Pyruvate serves as cofactor. Is synthesized initially as an inactive proenzyme. Formation of the active enzyme involves a self-maturation process in which the active site pyruvoyl group is generated from an internal serine residue via an autocatalytic post-translational modification. Two non-identical subunits are generated from the proenzyme in this reaction, and the pyruvate is formed at the N-terminus of the alpha chain, which is derived from the carboxyl end of the proenzyme. The autoendoproteolytic cleavage occurs by a canonical serine protease mechanism, in which the side chain hydroxyl group of the serine supplies its oxygen atom to form the C-terminus of the beta chain, while the remainder of the serine residue undergoes an oxidative deamination to produce ammonia and the pyruvoyl prosthetic group on the alpha chain. During this reaction, the Ser that is part of the protease active site of the proenzyme becomes the pyruvoyl prosthetic group, which constitutes an essential element of the active site of the mature decarboxylase.

The protein resides in the mitochondrion. It is found in the mitochondrion inner membrane. It catalyses the reaction a 1,2-diacyl-sn-glycero-3-phospho-L-serine + H(+) = a 1,2-diacyl-sn-glycero-3-phosphoethanolamine + CO2. It participates in phospholipid metabolism; phosphatidylethanolamine biosynthesis; phosphatidylethanolamine from CDP-diacylglycerol: step 2/2. Its function is as follows. Catalyzes the formation of phosphatidylethanolamine (PtdEtn) from phosphatidylserine (PtdSer). Plays a central role in phospholipid metabolism and in the interorganelle trafficking of phosphatidylserine. Together with psd2 and psd3, responsible for the majority of phosphatidylethanolamine synthesis. This Schizosaccharomyces pombe (strain 972 / ATCC 24843) (Fission yeast) protein is Phosphatidylserine decarboxylase proenzyme 1, mitochondrial.